Consider the following 326-residue polypeptide: tRNA uridine(34) hydroxylase (326 aa).

The 95-residue stretch at 123-217 (SDPDVLLVDT…YLEEVKQEES (95 aa)) folds into the Rhodanese domain. The active-site Cysteine persulfide intermediate is Cys177. The tract at residues 304 to 326 (VSQVILSRRTEKEDQRQAQNKKA) is disordered.

It belongs to the TrhO family.

The enzyme catalyses uridine(34) in tRNA + AH2 + O2 = 5-hydroxyuridine(34) in tRNA + A + H2O. Its function is as follows. Catalyzes oxygen-dependent 5-hydroxyuridine (ho5U) modification at position 34 in tRNAs. The chain is tRNA uridine(34) hydroxylase from Shewanella sediminis (strain HAW-EB3).